The sequence spans 511 residues: GATA zinc finger domain-containing protein 15 (511 aa).

A compositionally biased stretch (low complexity) spans Thr-1–Asn-111. 3 disordered regions span residues Thr-1–Phe-194, Asn-214–Lys-313, and Asn-325–Pro-355. The span at Ser-124 to Pro-135 shows a compositional bias: polar residues. Over residues Asn-136 to Gln-166 the composition is skewed to low complexity. Polar residues predominate over residues Lys-167 to His-185. 2 stretches are compositionally biased toward low complexity: residues Asn-214 to Asn-309 and Ser-337 to Pro-351. Residues Cys-453–Cys-478 form a GATA-type zinc finger.

This chain is GATA zinc finger domain-containing protein 15 (gtaO), found in Dictyostelium discoideum (Social amoeba).